The sequence spans 324 residues: MDTLTRFLPEHLQQNQLPEALGGVLLSVVSACTEINAKVRLGALAGVLGMAGTGNIQGEDQKKLDVIANNIMIDTLKANSAVAGLASEEEDTFVNAGENGRYLVLFDPLDGSSNIDVNISVGTIFSILEKPEGALATESFLQTGRQQLAAGYVLYGPQTQLVFTFGHGVYMFTLNAENEFVLTKENPKVPESTKEFAINMSNRRHWLPPVQQYIDELLAGETGTRGKNYNMRWVASMVAEIHRILMRGGVFMYPQDKRDPAKPGKLRLMYEANPMSLILEQAGASASNAYQAMLDIQPENLHQRVAVFMGSSEEVAYLDRLHAK.

Glu-88, Asp-107, Leu-109, and Asp-110 together coordinate Mg(2+). Residues 110–113 (DGSS), Asn-199, and Lys-265 contribute to the substrate site. Residue Glu-271 participates in Mg(2+) binding.

It belongs to the FBPase class 1 family. As to quaternary structure, homotetramer. It depends on Mg(2+) as a cofactor.

The protein localises to the cytoplasm. The enzyme catalyses beta-D-fructose 1,6-bisphosphate + H2O = beta-D-fructose 6-phosphate + phosphate. It participates in carbohydrate biosynthesis; gluconeogenesis. The chain is Fructose-1,6-bisphosphatase class 1 from Neisseria meningitidis serogroup B (strain ATCC BAA-335 / MC58).